We begin with the raw amino-acid sequence, 751 residues long: Catalase-peroxidase (751 aa).

The segment at 1 to 24 (MADKCPFHNQAPKPNVAGSGTQNR) is disordered. Residues 95–241 (WHSAGTYRTF…LAAAHMGLIY (147 aa)) constitute a cross-link (tryptophyl-tyrosyl-methioninium (Trp-Tyr) (with M-267)). His96 (proton acceptor) is an active-site residue. The tryptophyl-tyrosyl-methioninium (Tyr-Met) (with W-95) cross-link spans 241 to 267 (YVNPEGPDGNPDPVAAARDIRTTFARM). A heme b-binding site is contributed by His282.

This sequence belongs to the peroxidase family. Peroxidase/catalase subfamily. Homodimer or homotetramer. Requires heme b as cofactor. In terms of processing, formation of the three residue Trp-Tyr-Met cross-link is important for the catalase, but not the peroxidase activity of the enzyme.

It is found in the cytoplasm. The enzyme catalyses H2O2 + AH2 = A + 2 H2O. It catalyses the reaction 2 H2O2 = O2 + 2 H2O. Bifunctional enzyme with both catalase and broad-spectrum peroxidase activity. This is Catalase-peroxidase from Aspergillus oryzae (strain ATCC 42149 / RIB 40) (Yellow koji mold).